We begin with the raw amino-acid sequence, 87 residues long: U3-theraphotoxin-Hhn1a 18 (87 aa).

The signal sequence occupies residues 1–24 (MVNTKASMFLTFAGLVLLFVVCYA). Residues 25-52 (SESEEKEFPKEMLSSIFAVDNDFKQEER) constitute a propeptide that is removed on maturation. Disulfide bonds link Cys-54-Cys-67, Cys-61-Cys-72, and Cys-66-Cys-79.

It belongs to the neurotoxin 10 (Hwtx-1) family. 51 (Hntx-8) subfamily. Hntx-8 sub-subfamily. In terms of tissue distribution, expressed by the venom gland.

It localises to the secreted. Ion channel inhibitor. The protein is U3-theraphotoxin-Hhn1a 18 of Cyriopagopus hainanus (Chinese bird spider).